We begin with the raw amino-acid sequence, 346 residues long: Protein-glutamate methylesterase/protein-glutamine glutaminase (346 aa).

The 118-residue stretch at 6 to 123 (KVLVVDDSAF…SLDLEKVRDL (118 aa)) folds into the Response regulatory domain. 4-aspartylphosphate is present on Asp-57. The region spanning 155–346 (PFDKTIIVIG…ADSIVRQCKR (192 aa)) is the CheB-type methylesterase domain. Active-site residues include Ser-166, His-193, and Asp-289.

This sequence belongs to the CheB family. Post-translationally, phosphorylated by CheA. Phosphorylation of the N-terminal regulatory domain activates the methylesterase activity.

It is found in the cytoplasm. The enzyme catalyses [protein]-L-glutamate 5-O-methyl ester + H2O = L-glutamyl-[protein] + methanol + H(+). It catalyses the reaction L-glutaminyl-[protein] + H2O = L-glutamyl-[protein] + NH4(+). Its function is as follows. Involved in chemotaxis. Part of a chemotaxis signal transduction system that modulates chemotaxis in response to various stimuli. Catalyzes the demethylation of specific methylglutamate residues introduced into the chemoreceptors (methyl-accepting chemotaxis proteins or MCP) by CheR. Also mediates the irreversible deamidation of specific glutamine residues to glutamic acid. The sequence is that of Protein-glutamate methylesterase/protein-glutamine glutaminase from Halalkalibacterium halodurans (strain ATCC BAA-125 / DSM 18197 / FERM 7344 / JCM 9153 / C-125) (Bacillus halodurans).